The primary structure comprises 1141 residues: Eukaryotic translation initiation factor 3 subunit A (1141 aa).

The region spanning 319 to 501 is the PCI domain; that stretch reads LQRMAAHVLL…NSIYFGTDLT (183 aa). 2 stretches are compositionally biased toward basic and acidic residues: residues 588–623 and 829–899; these read QNNAREEEEARRQEEESRKAKLAEQKRLEQEQEERE and AAEE…RGGD. Disordered regions lie at residues 588 to 631 and 829 to 1141; these read QNNA…QNEI and AAEE…VKRR. S908 carries the post-translational modification Phosphoserine. Basic and acidic residues-rich tracts occupy residues 920–976, 990–1051, 1059–1087, and 1110–1131; these read ERND…EPDT, SRDD…EPQR, DAPRHADRENRRPAGERRDRDVRETRGDQ, and TREEKPAAKRDQAQEKENKAGD.

This sequence belongs to the eIF-3 subunit A family. In terms of assembly, component of the eukaryotic translation initiation factor 3 (eIF-3) complex. The eIF-3 complex interacts with pix.

The protein resides in the cytoplasm. In terms of biological role, RNA-binding component of the eukaryotic translation initiation factor 3 (eIF-3) complex, which is involved in protein synthesis of a specialized repertoire of mRNAs and, together with other initiation factors, stimulates binding of mRNA and methionyl-tRNAi to the 40S ribosome. The eIF-3 complex specifically targets and initiates translation of a subset of mRNAs involved in cell proliferation. The sequence is that of Eukaryotic translation initiation factor 3 subunit A from Drosophila simulans (Fruit fly).